We begin with the raw amino-acid sequence, 365 residues long: Putative fatty acid elongase 2 (365 aa).

Residues 1-68 (MPDSPTLHHN…SFEFIVNKTR (68 aa)) lie on the Lumenal side of the membrane. 2 N-linked (GlcNAc...) asparagine glycosylation sites follow: Asn-17 and Asn-65. The chain crosses the membrane as a helical span at residues 69–89 (FSSAPVVATIIISYYLLILVG). The Cytoplasmic segment spans residues 90–111 (GRIMRNRQPIRLQKIFQYYNLT). A helical membrane pass occupies residues 112–132 (FSIASAILALLIFEQVAPAIY). The Lumenal segment spans residues 133–149 (KHGFFFSICNEKAWTQP). The helical transmembrane segment at 150 to 170 (LVFLYYCAYISKFLELTDTFF) threads the bilayer. Residues 171–179 (LVLRKKPLQ) are Cytoplasmic-facing. A helical transmembrane segment spans residues 180 to 198 (FLHCYHHGATAVLVYTQIV). The Lumenal segment spans residues 199–204 (GRTSIS). The helical transmembrane segment at 205–225 (WLIIEINLLVHVTMYYYYYLV) threads the bilayer. The Cytoplasmic segment spans residues 226–241 (AKGIRVPWKKWVTRFQ). A helical membrane pass occupies residues 242–262 (IVQFFADLGFIYFAVYTEVAY). The Lumenal segment spans residues 263 to 278 (RLKFYKACMGHCSGHP). Residues 279-299 (LAAFCGLATISSYLVLFIVFY) traverse the membrane as a helical segment. The Cytoplasmic portion of the chain corresponds to 300–365 (HNTYKKNAAL…PISSGLNNEK (66 aa)).

Belongs to the ELO family.

It localises to the endoplasmic reticulum membrane. It carries out the reaction a very-long-chain acyl-CoA + malonyl-CoA + H(+) = a very-long-chain 3-oxoacyl-CoA + CO2 + CoA. Functionally, may be involved in the synthesis of very long chain fatty acids. The protein is Putative fatty acid elongase 2 of Schizosaccharomyces pombe (strain 972 / ATCC 24843) (Fission yeast).